The chain runs to 878 residues: E3 ubiquitin-protein ligase SH3RF3 (878 aa).

A disordered region spans residues 19 to 40 (RGEGEDRQGEQQRGAQARTEED). The RING-type zinc finger occupies 52 to 93 (CSVCLERLDTTAKVLPCQHTFCRRCLESIVCSRHELRCPECR). The tract at residues 120–145 (PRTGASPGSSPPARPGPGTFSALAGG) is disordered. SH3 domains follow at residues 187–246 (SQLP…CVRP) and 249–312 (QALP…LNDS). Positions 364–433 (RVDSKKNAKK…TVPTQDSSSA (70 aa)) are interaction with RAC1. Ser395 is subject to Phosphoserine. One can recognise an SH3 3 domain in the interval 458 to 519 (LPLNVYLALY…PGNYVTPVSR (62 aa)). Disordered regions lie at residues 574-659 (QHPA…CPRP) and 688-758 (PISG…MGPE). Polar residues-rich tracts occupy residues 590–609 (AQPT…THAS), 618–633 (ATVS…SRLP), 643–653 (ASPQHGQQSPA), and 690–699 (SGLSTPSLIN). The segment covering 703 to 716 (KPDDKKNEKKEKKS) has biased composition (basic and acidic residues). Residues 741–752 (HDPQSAMDTSLQ) show a composition bias toward polar residues. Ser792 carries the post-translational modification Phosphoserine. The SH3 4 domain maps to 819–878 (LPRERYRVVVSYPPQSEAEIELKEGDIVFVHKKHEDGWFKGTLQRNGRTGLFPGSFVESF).

This sequence belongs to the SH3RF family. Interacts (via SH3 domain 3) with PAK2. Interacts with RAC1 (GTP-bound form). Post-translationally, autoubiquitinated.

It catalyses the reaction S-ubiquitinyl-[E2 ubiquitin-conjugating enzyme]-L-cysteine + [acceptor protein]-L-lysine = [E2 ubiquitin-conjugating enzyme]-L-cysteine + N(6)-ubiquitinyl-[acceptor protein]-L-lysine.. The protein operates within protein modification; protein ubiquitination. In terms of biological role, has E3 ubiquitin-protein ligase activity. The protein is E3 ubiquitin-protein ligase SH3RF3 (Sh3rf3) of Mus musculus (Mouse).